The sequence spans 275 residues: NH(3)-dependent NAD(+) synthetase (275 aa).

46–53 (GISGGQDS) serves as a coordination point for ATP. Residue Asp52 coordinates Mg(2+). Arg140 is a deamido-NAD(+) binding site. Thr160 contributes to the ATP binding site. Mg(2+) is bound at residue Glu165. Deamido-NAD(+) contacts are provided by Lys173 and Asp180. Positions 189 and 211 each coordinate ATP. Residue 260 to 261 (HK) coordinates deamido-NAD(+).

This sequence belongs to the NAD synthetase family. Homodimer.

The catalysed reaction is deamido-NAD(+) + NH4(+) + ATP = AMP + diphosphate + NAD(+) + H(+). The protein operates within cofactor biosynthesis; NAD(+) biosynthesis; NAD(+) from deamido-NAD(+) (ammonia route): step 1/1. Functionally, catalyzes the ATP-dependent amidation of deamido-NAD to form NAD. Uses ammonia as a nitrogen source. The polypeptide is NH(3)-dependent NAD(+) synthetase (Cronobacter sakazakii (strain ATCC BAA-894) (Enterobacter sakazakii)).